The following is a 322-amino-acid chain: Replication factor C small subunit (322 aa).

46–53 contributes to the ATP binding site; the sequence is GSAGVGKT.

Belongs to the activator 1 small subunits family. RfcS subfamily. Heteromultimer composed of small subunits (RfcS) and large subunits (RfcL).

In terms of biological role, part of the RFC clamp loader complex which loads the PCNA sliding clamp onto DNA. The polypeptide is Replication factor C small subunit (Methanoregula boonei (strain DSM 21154 / JCM 14090 / 6A8)).